Reading from the N-terminus, the 164-residue chain is Putative 4-hydroxy-4-methyl-2-oxoglutarate aldolase (164 aa).

Substrate contacts are provided by residues 75 to 78 and R97; that span reads GDLI. D98 is a binding site for a divalent metal cation.

The protein belongs to the class II aldolase/RraA-like family. Homotrimer. It depends on a divalent metal cation as a cofactor.

It catalyses the reaction 4-hydroxy-4-methyl-2-oxoglutarate = 2 pyruvate. It carries out the reaction oxaloacetate + H(+) = pyruvate + CO2. Functionally, catalyzes the aldol cleavage of 4-hydroxy-4-methyl-2-oxoglutarate (HMG) into 2 molecules of pyruvate. Also contains a secondary oxaloacetate (OAA) decarboxylase activity due to the common pyruvate enolate transition state formed following C-C bond cleavage in the retro-aldol and decarboxylation reactions. The chain is Putative 4-hydroxy-4-methyl-2-oxoglutarate aldolase from Shewanella oneidensis (strain ATCC 700550 / JCM 31522 / CIP 106686 / LMG 19005 / NCIMB 14063 / MR-1).